The sequence spans 1065 residues: Leucine-rich repeats and immunoglobulin-like domains protein 2 (1065 aa).

An N-terminal signal peptide occupies residues 1–40; sequence MAPAPLGVPEEQLLGCRSRVLSRLLFIAQTALLLLPAAGA. Residues 41–75 enclose the LRRNT domain; it reads GLCPAPCSCRIPLLDCSRRKLPAPSWRALSGLLPP. Residues 41 to 807 are Extracellular-facing; it reads GLCPAPCSCR…HEDDGWTTVG (767 aa). LRR repeat units lie at residues 76 to 97, 98 to 119, 121 to 142, 145 to 166, 168 to 189, 193 to 214, 216 to 237, 240 to 261, 264 to 285, 288 to 309, 312 to 333, 336 to 357, 360 to 382, 387 to 408, and 411 to 432; these read DTAILDFSHNRLSNWNISLESQ, TLQEVKMNYNELTEIPYFGEPT, NITLLSLVHNIIPEINAQALQF, ALESLDLSSNIISEIKTSSFPR, QLKYLNLSNNRITTLEAGCFDN, SLLVVKLNRNRMSMIPPKIFKL, HLQFLELKRNRIKIVEGLTFQG, SLRSLKMQRNGISKLKDGAFFG, NMEELELEHNNLTRVNKGWLYG, MLQQLYVSQNAIERISPDAWEF, RLSELDLSYNQLTRLDESAFVG, LLERLNLGDNRVTHIADGVFRF, NLQTLDLRNNEISWAIEDASEAF, SLTKLILQGNQIKSITKKAFIG, and SLEHLDLNNNAIMSIQENAFSQ. N91 carries N-linked (GlcNAc...) asparagine glycosylation. A glycan (N-linked (GlcNAc...) asparagine) is linked at N121. N-linked (GlcNAc...) asparagine glycans are attached at residues N173 and N189. N-linked (GlcNAc...) asparagine glycosylation occurs at N274. N-linked (GlcNAc...) asparagine glycans are attached at residues N441, N468, N514, N571, and N589. One can recognise an LRRCT domain in the interval 443–494; that stretch reads SSLLCDCHLKWLLQWLVDNNFQHSVNVSCAHPEWLAGQSILNVDLKDFVCDD. Ig-like C2-type domains lie at 498–597, 602–691, and 696–785; these read PQIR…AKLT, PSFL…ASLT, and PSFI…NVIS. A disulfide bridge links C519 with C580. C623 and C675 are joined by a disulfide. N687 and N728 each carry an N-linked (GlcNAc...) asparagine glycan. An intrachain disulfide couples C717 to C766. Residues 808–828 form a helical membrane-spanning segment; the sequence is IVIIVVVCCVVGTSLIWVIVI. Topologically, residues 829-1065 are cytoplasmic; sequence YHMRRKNEDY…RNIQDGSEGT (237 aa). A Phosphotyrosine modification is found at Y906. 2 disordered regions span residues 963–990 and 1003–1040; these read SANREPSAFPTNHERISEKKLPSTQMSG and ELGLPHPPFSQQPVHESPQLHQNEGLAGREPDCSASSM. Basic and acidic residues predominate over residues 974 to 983; the sequence is NHERISEKKL. The segment covering 1013–1024 has biased composition (polar residues); it reads QQPVHESPQLHQ.

As to expression, detected in all tissues analyzed.

The protein localises to the cell membrane. It localises to the cytoplasm. This Homo sapiens (Human) protein is Leucine-rich repeats and immunoglobulin-like domains protein 2 (LRIG2).